Consider the following 376-residue polypeptide: Cytochrome b (376 aa).

Transmembrane regions (helical) follow at residues 28 to 48 (YGFL…FLAS), 72 to 94 (WCFR…LHIL), 107 to 127 (SWIS…IGYV), and 169 to 189 (FFVL…IHIF). Heme b contacts are provided by histidine 78 and histidine 92. Histidine 173 and histidine 187 together coordinate heme b. Histidine 192 provides a ligand contact to a ubiquinone. 4 helical membrane passes run 214 to 234 (LLSL…IQSI), 274 to 294 (IPSK…LFLL), 317 to 337 (VPII…CPLP), and 340 to 360 (IFIL…LFSL).

The protein belongs to the cytochrome b family. The main subunits of complex b-c1 are: cytochrome b, cytochrome c1 and the Rieske protein. It depends on heme b as a cofactor.

Its subcellular location is the mitochondrion inner membrane. In terms of biological role, component of the ubiquinol-cytochrome c reductase complex (complex III or cytochrome b-c1 complex) that is part of the mitochondrial respiratory chain. The b-c1 complex mediates electron transfer from ubiquinol to cytochrome c. Contributes to the generation of a proton gradient across the mitochondrial membrane that is then used for ATP synthesis. This chain is Cytochrome b (MT-CYB), found in Plasmodium berghei.